A 507-amino-acid chain; its full sequence is Germ cell nuclear acidic protein (507 aa).

Low complexity predominate over residues 1-51; it reads MDSGSSSSSSSSGSSSGSCSTSGSGSTSGSSTTSSSSSSSSSSSSSSSSSS. The disordered stretch occupies residues 1–507; it reads MDSGSSSSSS…GRGRGAKAGK (507 aa). Short sequence motifs (SUMO interaction motif 1 (SIM)) lie at residues 12 to 15, 66 to 69, 86 to 89, and 108 to 111; these read SGSS, CVVI, VCEI, and LIVI. 3 stretches are compositionally biased toward basic and acidic residues: residues 122–141, 179–354, and 431–449; these read KNTKQKSDEPQMSVLEKEGV, SEAK…KGEM, and PQDRADPQDLADPQDRGDS. The segment covering 480 to 507 has biased composition (basic residues); sequence GRGRGRGRGRGRGRGRGRGRGRGAKAGK.

It belongs to the serine-aspartate repeat-containing protein (SDr) family. In terms of assembly, interacts (via SIM domains) with SUMO2; this interaction allows the GCNA recruitment to DPCs sites. Interacts with TOP2A; this interaction allows the resolution of topoisomerase II (TOP2A) DNA-protein cross-links. As to expression, germ-cells specific.

The protein localises to the chromosome. It localises to the nucleus. It is found in the PML body. Its function is as follows. May play a role in DNA-protein cross-links (DPCs) clearance through a SUMO-dependent recruitment to sites of DPCs, ensuring the genomic stability by protecting germ cells and early embryos from various sources of damage. Can resolve the topoisomerase II (TOP2A) DPCs. This is Germ cell nuclear acidic protein from Mus musculus (Mouse).